We begin with the raw amino-acid sequence, 573 residues long: MQNIKSFMQFPASKKVYVEGSRPDIRVPMREITLSPTKTETGIIENEPVRVYDTSGPYTDPDFQPDIQKGLPPLRKRWILERGDVEEYEGRPVKPEDNGFRNGKQSEITLPFERKPLRAKKGKTVTQMHYAKRGIITPEMEFVAIRENIDPEIVRQEVAAGRAIIPSNINHPESEPMIIGSRFHVKINANIGNSAVTSSIEEEVEKMLWAVRWGADTIMDLSTGKHIHATREYIIRNSPVPVGTVPIYQALEKVNGVVEDLTWEIYRDTLIEQAEQGVDYFTIHAGVLLRYIPMTVNRTTGIVSRGGSIMAQWCLAHHEENFLYTHFEEICEILKTYDIAVSLGDGLRPGSIADANDEAQFAELETLGELTEIAWKHDVQVMIEGPGHVPMHKIKENVDKQIEICKGAPFYTLGPLTTDIAPGYDHITSAIGAAIIGAYGTAMLCYVTPKEHLGLPNKDDVREGVIAYKIAAHAADLAKGHPGAQRRDDALSKARFEFRWNDQFNLSLDPDRAREYHDETLPAEGAKVAHFCSMCGPKFCSMKISHELQKTVREEGMKQKAKEFVENGSSLYR.

Residues N190, M219, Y248, H284, 304–306 (SRG), 345–348 (DGLR), and E384 contribute to the substrate site. H388 serves as a coordination point for Zn(2+). Y411 lines the substrate pocket. Residue H452 coordinates Zn(2+). [4Fe-4S] cluster is bound by residues C532, C535, and C540.

This sequence belongs to the ThiC family. The cofactor is [4Fe-4S] cluster.

The catalysed reaction is 5-amino-1-(5-phospho-beta-D-ribosyl)imidazole + S-adenosyl-L-methionine = 4-amino-2-methyl-5-(phosphooxymethyl)pyrimidine + CO + 5'-deoxyadenosine + formate + L-methionine + 3 H(+). The protein operates within cofactor biosynthesis; thiamine diphosphate biosynthesis. Catalyzes the synthesis of the hydroxymethylpyrimidine phosphate (HMP-P) moiety of thiamine from aminoimidazole ribotide (AIR) in a radical S-adenosyl-L-methionine (SAM)-dependent reaction. This is Phosphomethylpyrimidine synthase from Geobacillus sp. (strain WCH70).